A 424-amino-acid polypeptide reads, in one-letter code: Adenosylmethionine-8-amino-7-oxononanoate aminotransferase (424 aa).

Position 46 (tryptophan 46) interacts with substrate. Position 106 to 107 (106 to 107 (GS)) interacts with pyridoxal 5'-phosphate. Tyrosine 138 provides a ligand contact to substrate. A pyridoxal 5'-phosphate-binding site is contributed by aspartate 240. Substrate is bound by residues lysine 269 and glycine 303. Residue lysine 269 is modified to N6-(pyridoxal phosphate)lysine. 304 to 305 (HS) lines the pyridoxal 5'-phosphate pocket. Substrate is bound at residue arginine 391.

The protein belongs to the class-III pyridoxal-phosphate-dependent aminotransferase family. BioA subfamily. As to quaternary structure, homodimer. It depends on pyridoxal 5'-phosphate as a cofactor.

The protein resides in the cytoplasm. The enzyme catalyses (8S)-8-amino-7-oxononanoate + S-adenosyl-L-methionine = S-adenosyl-4-methylsulfanyl-2-oxobutanoate + (7R,8S)-7,8-diammoniononanoate. It participates in cofactor biosynthesis; biotin biosynthesis; 7,8-diaminononanoate from 8-amino-7-oxononanoate (SAM route): step 1/1. Functionally, catalyzes the transfer of the alpha-amino group from S-adenosyl-L-methionine (SAM) to 7-keto-8-aminopelargonic acid (KAPA) to form 7,8-diaminopelargonic acid (DAPA). It is the only aminotransferase known to utilize SAM as an amino donor. Complements a bioU deletion in Synechocystis PCC 6803. This Synechococcus elongatus (strain ATCC 33912 / PCC 7942 / FACHB-805) (Anacystis nidulans R2) protein is Adenosylmethionine-8-amino-7-oxononanoate aminotransferase.